Here is a 930-residue protein sequence, read N- to C-terminus: A disintegrin and metalloproteinase with thrombospondin motifs 5 (930 aa).

Positions methionine 1 to serine 21 are cleaved as a signal peptide. Residues leucine 22 to arginine 261 constitute a propeptide that is removed on maturation. Residues proline 31–glycine 53 are compositionally biased toward low complexity. Disordered stretches follow at residues proline 31–glutamine 68 and alanine 207–arginine 231. Positions alanine 207–serine 214 match the Cysteine switch motif. Cysteine 209 contacts Zn(2+). Over residues threonine 211–histidine 225 the composition is skewed to polar residues. The Peptidase M12B domain occupies arginine 267–proline 476. 8 disulfide bridges follow: cysteine 342–cysteine 394, cysteine 371–cysteine 376, cysteine 388–cysteine 471, cysteine 426–cysteine 455, cysteine 497–cysteine 519, cysteine 508–cysteine 529, cysteine 514–cysteine 548, and cysteine 542–cysteine 553. Histidine 410 contributes to the Zn(2+) binding site. The active site involves glutamate 411. Positions 414 and 420 each coordinate Zn(2+). The Disintegrin domain occupies glutamate 485–serine 566. An N-linked (GlcNAc...) asparagine glycan is attached at asparagine 498. The region spanning histidine 567–proline 622 is the TSP type-1 1 domain. Tryptophan 570 and tryptophan 573 each carry a C-linked (Man) tryptophan glycan. Intrachain disulfides connect cysteine 579–cysteine 616, cysteine 583–cysteine 621, and cysteine 594–cysteine 606. An O-linked (Fuc...) serine glycan is attached at serine 582. 3 N-linked (GlcNAc...) asparagine glycosylation sites follow: asparagine 728, asparagine 802, and asparagine 807. Residues threonine 732–serine 874 form a spacer region. The region spanning threonine 875–lysine 929 is the TSP type-1 2 domain.

It depends on Zn(2+) as a cofactor. Post-translationally, the precursor is cleaved by furin and PCSK7 outside of the cell. In terms of processing, glycosylated. Can be O-fucosylated by POFUT2 on a serine or a threonine residue found within the consensus sequence C1-X(2)-(S/T)-C2-G of the TSP type-1 repeat domains where C1 and C2 are the first and second cysteine residue of the repeat, respectively. Fucosylated repeats can then be further glycosylated by the addition of a beta-1,3-glucose residue by the glucosyltransferase, B3GALTL. Fucosylation mediates the efficient secretion of ADAMTS family members. Can also be C-glycosylated with one or two mannose molecules on tryptophan residues within the consensus sequence W-X-X-W of the TPRs, and N-glycosylated. These other glycosylations can also facilitate secretion. Expressed in skeletal muscle.

It is found in the secreted. It localises to the extracellular space. Its subcellular location is the extracellular matrix. Its function is as follows. Metalloproteinase that plays an important role in connective tissue organization, development, inflammation and cell migration. Extracellular matrix (ECM) degrading enzyme that shows proteolytic activity toward the hyalectan group of chondroitin sulfate proteoglycans (CSPGs) including ACAN, VCAN, BCAN and NCAN. Cleavage within the hyalectans occurs at Glu-Xaa recognition motifs. Plays a role in embryonic development, including limb and cardiac morphogenesis, and skeletal muscle development through its VCAN remodeling properties. Cleaves VCAN in the pericellular matrix surrounding myoblasts, facilitating myoblast contact and fusion which is required for skeletal muscle development and regeneration. Participates in the development of brown adipose tissue and browning of white adipose tissue. Plays an important role for T-lymphocyte migration from draining lymph nodes following viral infection. In Mus musculus (Mouse), this protein is A disintegrin and metalloproteinase with thrombospondin motifs 5 (Adamts5).